Consider the following 417-residue polypeptide: MLKREMNIADYDAELWQAMEQEKVRQEEHIELIASENYTSPRVMQAQGSQLTNKYAEGYPGKRYYGGCEYVDIVEQLAIDRAKELFGADYANVQPHSGSQANFAVYTALLEPGDTVLGMNLAHGGHLTHGSPVNFSGKLYNIVPYGIDATGHIDYADLEKQAKEHKPKMIIGGFSAYSGVVDWAKMREIADSIGAYLFVDMAHVAGLVAAGVYPNPVPHAHVVTTTTHKTLAGPRGGLILAKGGSEELYKKLNSAVFPGGQGGPLMHVIAGKAVALKEAMEPEFKTYQQQVAKNAKAMVEVFLERGYKVVSGGTDNHLFLVDLVDKNLTGKEADAALGRANITVNKNSVPNDPKSPFVTSGIRVGTPAITRRGFKEAEAKELAGWMCDVLDSINDEAVIERIKGKVLDICARYPVYA.

Lys-54 is subject to N6-acetyllysine. Residues Leu-121 and 125 to 127 (GHL) each bind (6S)-5,6,7,8-tetrahydrofolate. An N6-(pyridoxal phosphate)lysine modification is found at Lys-229. Residues Lys-250, Lys-285, and Lys-354 each carry the N6-acetyllysine modification. 355-357 (SPF) is a binding site for (6S)-5,6,7,8-tetrahydrofolate. Lys-375 is modified (N6-acetyllysine).

It belongs to the SHMT family. Homodimer. Pyridoxal 5'-phosphate is required as a cofactor.

Its subcellular location is the cytoplasm. It catalyses the reaction (6R)-5,10-methylene-5,6,7,8-tetrahydrofolate + glycine + H2O = (6S)-5,6,7,8-tetrahydrofolate + L-serine. It participates in one-carbon metabolism; tetrahydrofolate interconversion. It functions in the pathway amino-acid biosynthesis; glycine biosynthesis; glycine from L-serine: step 1/1. Functionally, catalyzes the reversible interconversion of serine and glycine with tetrahydrofolate (THF) serving as the one-carbon carrier. This reaction serves as the major source of one-carbon groups required for the biosynthesis of purines, thymidylate, methionine, and other important biomolecules. Also exhibits THF-independent aldolase activity toward beta-hydroxyamino acids, producing glycine and aldehydes, via a retro-aldol mechanism. This is Serine hydroxymethyltransferase from Escherichia coli O1:K1 / APEC.